The following is a 472-amino-acid chain: Probable dipeptidase A (472 aa).

Cys-10 is a catalytic residue.

This sequence belongs to the peptidase C69 family.

It carries out the reaction an L-aminoacyl-L-amino acid + H2O = 2 an L-alpha-amino acid. In Streptococcus pyogenes serotype M18 (strain MGAS8232), this protein is Probable dipeptidase A (pepDA).